We begin with the raw amino-acid sequence, 505 residues long: Maturase K (505 aa).

The protein belongs to the intron maturase 2 family. MatK subfamily.

Its subcellular location is the plastid. The protein localises to the chloroplast. Functionally, usually encoded in the trnK tRNA gene intron. Probably assists in splicing its own and other chloroplast group II introns. The polypeptide is Maturase K (Chiococca alba (West Indian milkberry)).